The chain runs to 489 residues: Major aspartyl peptidase 1 (489 aa).

The N-terminal stretch at 1–16 is a signal peptide; that stretch reads MHYLAVALPLLTLALA. In terms of domain architecture, Peptidase A1 spans 101–432; sequence YAGQVSIGTP…RYNPAAIGFA (332 aa). Asp-119 is a catalytic residue. Residue Gly-121 coordinates pepstatin A. A disulfide bridge connects residues Cys-132 and Cys-137. Pepstatin A-binding residues include Thr-161, Gly-163, and Ser-164. Asn-266 carries N-linked (GlcNAc...) asparagine glycosylation. Tyr-286 provides a ligand contact to pepstatin A. Asp-317 is an active-site residue. Thr-320 and Thr-321 together coordinate pepstatin A. A disulfide bond links Cys-357 and Cys-391. The segment at 442–466 is disordered; that stretch reads AGNPSSSTTGGGTSGSNGGGSSSGA. Residues 450-463 show a composition bias toward gly residues; sequence TGGGTSGSNGGGSS. A propeptide spans 456–489 (removed at pH 5.0; by autocatalysis); sequence GSNGGGSSSGAMERKGVQLGWLVGAVAVGVAAMI.

Belongs to the peptidase A1 family. In terms of assembly, monomer. In terms of processing, activated by the autocatalytic cleavage of the propeptide. Cleaved at the end of the propeptide promiscuously from residue 76 to residue 79. C-terminal cleavage by autocatalysis at Gly-456 at the pH optimum indicating a possible regulatory or other function of this propeptide.

The protein localises to the secreted. Its activity is regulated as follows. Activated by low pH. Inhibited by pepstatin A with an IC(50) of 1.4 nM. Inhibited by acetyl pepstatin. Inhibited by HIV antiretroviral therapy protease inhibitors including amprenavir and ritonavir. Inhibited by HIV-1 protease inhibitor brecanavir with an approximate IC(50) of 352 nM. Inhibited by HIV-1 protease inhibitors CGP53437 and GS-8374. From the tested peptidomimetic inhibitor molecules, macrocycles containing P2-P3' tethered side chains, statines in P1 and an alpha amino acid in P2' are the best. From the linear peptidomimetic inhibitors, the ones with a phenylstatine or hydroxyethylamine scissile bond isoster are better than compounds with a reduced bond or a homo-amide. Overall, inhibitors with a phenylalanine side chain, either unsubstituted or with a small substituent, is preferred in P1 while a bulkier P1 side chain leads to lower inhibition. Possesses prevalent extracellular endopeptidase activity at low pH condition. Required for high-density growth in acidic environments. Broad substrate specificity with preference cleavage of the peptide substrate between hydrophobic amino acids. Cleaves substrate at P1-P1' between Phe-Leu. Positively charged amino acids are preferred at P2. Prefers hydrophobic amino acids at the P3 and P4 positions. Cleaves substrate also at P1'-P2' between Leu-Val to some degree. Required for virulence in mouse inhalation model of infection. The protein is Major aspartyl peptidase 1 of Cryptococcus neoformans var. grubii serotype A (strain H99 / ATCC 208821 / CBS 10515 / FGSC 9487) (Filobasidiella neoformans var. grubii).